Consider the following 104-residue polypeptide: L-rhamnose mutarotase (104 aa).

Tyrosine 18 serves as a coordination point for substrate. Histidine 22 (proton donor) is an active-site residue. Residues tyrosine 41 and 76 to 77 (WW) each bind substrate.

The protein belongs to the rhamnose mutarotase family. Homodimer.

It is found in the cytoplasm. It catalyses the reaction alpha-L-rhamnose = beta-L-rhamnose. It functions in the pathway carbohydrate metabolism; L-rhamnose metabolism. In terms of biological role, involved in the anomeric conversion of L-rhamnose. In Bacteroides thetaiotaomicron (strain ATCC 29148 / DSM 2079 / JCM 5827 / CCUG 10774 / NCTC 10582 / VPI-5482 / E50), this protein is L-rhamnose mutarotase.